We begin with the raw amino-acid sequence, 263 residues long: 5'-nucleotidase SurE (263 aa).

4 residues coordinate a divalent metal cation: aspartate 15, aspartate 16, serine 46, and asparagine 102.

It belongs to the SurE nucleotidase family. A divalent metal cation serves as cofactor.

It is found in the cytoplasm. It catalyses the reaction a ribonucleoside 5'-phosphate + H2O = a ribonucleoside + phosphate. Nucleotidase that shows phosphatase activity on nucleoside 5'-monophosphates. The sequence is that of 5'-nucleotidase SurE from Chlorobaculum tepidum (strain ATCC 49652 / DSM 12025 / NBRC 103806 / TLS) (Chlorobium tepidum).